A 470-amino-acid chain; its full sequence is Sulfate adenylyltransferase subunit 1 (470 aa).

The 217-residue stretch at 22–238 (KELLRFITCG…ETIKIDYAYT (217 aa)) folds into the tr-type G domain. Positions 31-38 (GSVDDGKS) are G1. Position 31–38 (31–38 (GSVDDGKS)) interacts with GTP. A G2 region spans residues 89–93 (GITID). The segment at 110 to 113 (DTPG) is G3. Residues 110 to 114 (DTPGH) and 165 to 168 (NKMD) contribute to the GTP site. Residues 165–168 (NKMD) are G4. The segment at 202-204 (SAL) is G5.

It belongs to the TRAFAC class translation factor GTPase superfamily. Classic translation factor GTPase family. CysN/NodQ subfamily. As to quaternary structure, heterodimer composed of CysD, the smaller subunit, and CysN.

The catalysed reaction is sulfate + ATP + H(+) = adenosine 5'-phosphosulfate + diphosphate. It participates in sulfur metabolism; hydrogen sulfide biosynthesis; sulfite from sulfate: step 1/3. With CysD forms the ATP sulfurylase (ATPS) that catalyzes the adenylation of sulfate producing adenosine 5'-phosphosulfate (APS) and diphosphate, the first enzymatic step in sulfur assimilation pathway. APS synthesis involves the formation of a high-energy phosphoric-sulfuric acid anhydride bond driven by GTP hydrolysis by CysN coupled to ATP hydrolysis by CysD. The polypeptide is Sulfate adenylyltransferase subunit 1 (Francisella tularensis subsp. tularensis (strain WY96-3418)).